We begin with the raw amino-acid sequence, 358 residues long: 3-dehydroquinate synthase (358 aa).

NAD(+) contacts are provided by residues 105 to 109 (GVVGD), 129 to 130 (TT), Lys-142, Lys-151, and 169 to 172 (TLKT). Positions 184, 245, and 262 each coordinate Zn(2+).

Belongs to the sugar phosphate cyclases superfamily. Dehydroquinate synthase family. It depends on NAD(+) as a cofactor. The cofactor is Co(2+). Zn(2+) serves as cofactor.

It is found in the cytoplasm. It catalyses the reaction 7-phospho-2-dehydro-3-deoxy-D-arabino-heptonate = 3-dehydroquinate + phosphate. Its pathway is metabolic intermediate biosynthesis; chorismate biosynthesis; chorismate from D-erythrose 4-phosphate and phosphoenolpyruvate: step 2/7. Catalyzes the conversion of 3-deoxy-D-arabino-heptulosonate 7-phosphate (DAHP) to dehydroquinate (DHQ). In Enterococcus faecalis (strain ATCC 47077 / OG1RF), this protein is 3-dehydroquinate synthase.